The sequence spans 506 residues: MSSDESSDGLEELQSLKALYGQQEQEKPAKIKRERYIPKASQAKELNYVEVPMEKVLFGDRQRLLTNLAKSVGQKLPNDDEDEQEENPGQAKPGDKRKAAWSDSDDEDLQVGDVKKATKHTGPLNHLRKDKSYKEYLTARFQRTLNQPKWAEKKVKNEDDEDVSSDEELLRTVGFIDRKARNSDLPQKTLNFKRVKDLNRATYAEGNATSIQFHPTSTAALVAGMNGLATIYAVDGQKNERLHNMRFKKFPLACSRIAPCGTRAFFGSVKPFYYSYDLLEAKESKLKLPGAMEFMHRFEVSPCGKFIVTAGKFGAIHLLTAKTNELLHSFKQEGKVKGFTWSSDSKRILVCGSTSNVSVLNLRQNLIEHIFMDDGCIHGESIQLSPNQRLLATGSQEGVVNIYDYESIFASKAPQPEKRFMNLRTAITDLQFNHSSELLAMCSSEAPNAFKLAHFPSATVYSNFPAQNEKVGFVTSMAFSPHSSFLAFATKGKQVPLFRLKYFKGY.

Positions 1 to 11 (MSSDESSDGLE) are enriched in acidic residues. Disordered stretches follow at residues 1-44 (MSSD…SQAK) and 69-126 (AKSV…PLNH). The segment covering 24–37 (EQEKPAKIKRERYI) has biased composition (basic and acidic residues). 4 positions are modified to phosphoserine: Ser-102, Ser-104, Ser-164, and Ser-165. 4 WD repeats span residues 203–242 (YAEG…NERL), 331–370 (KQEG…IEHI), 372–413 (MDDG…ASKA), and 469–505 (EKVG…YFKG).

Belongs to the WD repeat UTP18 family. Component of U3 snoRNP complex.

The protein localises to the nucleus. Its subcellular location is the nucleolus. Component of a nucleolar small nuclear ribonucleoprotein particle (snoRNP) thought to participate in the processing and modification of pre-ribosomal RNA. Regulation of cell size by ribosome synthesis is an important parameter for stem cell maintenance and function. This is U3 small nucleolar RNA-associated protein 18 homolog (wcd) from Drosophila melanogaster (Fruit fly).